We begin with the raw amino-acid sequence, 573 residues long: Dilute domain-containing protein SPAC25B8.08 (573 aa).

The Dilute domain occupies 180 to 464 (NAFLCEVNQV…LKKLDAFHEE (285 aa)).

It localises to the cytoplasm. Its subcellular location is the golgi apparatus. The polypeptide is Dilute domain-containing protein SPAC25B8.08 (Schizosaccharomyces pombe (strain 972 / ATCC 24843) (Fission yeast)).